Here is a 155-residue protein sequence, read N- to C-terminus: Peptide methionine sulfoxide reductase MsrB (155 aa).

A MsrB domain is found at 15–137 (REALIATLNA…NSVSLTFIPT (123 aa)). Zn(2+) is bound by residues Cys-54, Cys-57, Cys-103, and Cys-106. The Nucleophile role is filled by Cys-126.

This sequence belongs to the MsrB Met sulfoxide reductase family. Requires Zn(2+) as cofactor.

The catalysed reaction is L-methionyl-[protein] + [thioredoxin]-disulfide + H2O = L-methionyl-(R)-S-oxide-[protein] + [thioredoxin]-dithiol. This is Peptide methionine sulfoxide reductase MsrB from Xylella fastidiosa (strain 9a5c).